The chain runs to 345 residues: Anthranilate phosphoribosyltransferase (345 aa).

Residues G88, 91-92, T96, 98-101, 116-124, and S128 each bind 5-phospho-alpha-D-ribose 1-diphosphate; these read GD, NIST, and KHGNRSASG. G88 is a binding site for anthranilate. S100 serves as a coordination point for Mg(2+). N119 is a binding site for anthranilate. R174 contributes to the anthranilate binding site. Mg(2+) is bound by residues D233 and E234.

Belongs to the anthranilate phosphoribosyltransferase family. Homodimer. The cofactor is Mg(2+).

The catalysed reaction is N-(5-phospho-beta-D-ribosyl)anthranilate + diphosphate = 5-phospho-alpha-D-ribose 1-diphosphate + anthranilate. It participates in amino-acid biosynthesis; L-tryptophan biosynthesis; L-tryptophan from chorismate: step 2/5. In terms of biological role, catalyzes the transfer of the phosphoribosyl group of 5-phosphorylribose-1-pyrophosphate (PRPP) to anthranilate to yield N-(5'-phosphoribosyl)-anthranilate (PRA). The chain is Anthranilate phosphoribosyltransferase from Prochlorococcus marinus (strain NATL1A).